A 682-amino-acid chain; its full sequence is Pesticidal crystal protein Cry19Ba (682 aa).

The protein belongs to the delta endotoxin family.

In terms of biological role, promotes colloidosmotic lysis by binding to the midgut epithelial cells of mosquitos. Has larvicidal activity against Culex pipiens molestus, but not to Anopheles stephensi. The protein is Pesticidal crystal protein Cry19Ba of Bacillus thuringiensis subsp. higo.